Reading from the N-terminus, the 117-residue chain is NADH-ubiquinone oxidoreductase chain 3 (117 aa).

3 helical membrane-spanning segments follow: residues 2-22, 56-76, and 85-105; these read ILYVLPTSLSLCLLLMIIYLL, FFILTVLFLIFDVEVVLLFPV, and SPLIIMSIILFMMVLLIGLLY.

The protein belongs to the complex I subunit 3 family.

The protein localises to the mitochondrion membrane. The catalysed reaction is a ubiquinone + NADH + 5 H(+)(in) = a ubiquinol + NAD(+) + 4 H(+)(out). Functionally, core subunit of the mitochondrial membrane respiratory chain NADH dehydrogenase (Complex I) that is believed to belong to the minimal assembly required for catalysis. Complex I functions in the transfer of electrons from NADH to the respiratory chain. The immediate electron acceptor for the enzyme is believed to be ubiquinone. This chain is NADH-ubiquinone oxidoreductase chain 3 (ND3), found in Albinaria caerulea (Land snail).